We begin with the raw amino-acid sequence, 121 residues long: Ribosome-binding factor A (121 aa).

It belongs to the RbfA family. As to quaternary structure, monomer. Binds 30S ribosomal subunits, but not 50S ribosomal subunits or 70S ribosomes.

It localises to the cytoplasm. Functionally, one of several proteins that assist in the late maturation steps of the functional core of the 30S ribosomal subunit. Associates with free 30S ribosomal subunits (but not with 30S subunits that are part of 70S ribosomes or polysomes). Required for efficient processing of 16S rRNA. May interact with the 5'-terminal helix region of 16S rRNA. The sequence is that of Ribosome-binding factor A from Clostridium novyi (strain NT).